Here is a 403-residue protein sequence, read N- to C-terminus: Lipid droplet-regulating VLDL assembly factor AUP1 (403 aa).

The Cytoplasmic segment spans residues 1 to 21; it reads MEQPSVESLLELRRFPRKQLS. An intramembrane segment occupies 22–42; the sequence is LILLLLYSPLGLCLFLIRLFI. At 43–399 the chain is on the cytoplasmic side; that stretch reads GAHVFLVSCV…GSVGREEEEK (357 aa). The CUE domain maps to 286–328; sequence TQMQMAQHVKEVLPQVPLSAIHRDLGHTGCIDTTITNFLEGRV.

The protein belongs to the AUP1 family.

It localises to the endoplasmic reticulum membrane. The protein localises to the lipid droplet. Functionally, plays a role in the translocation of terminally misfolded proteins from the endoplasmic reticulum lumen to the cytoplasm and their degradation by the proteasome. Plays a role in lipid droplet formation. Induces lipid droplet clustering. In Xenopus tropicalis (Western clawed frog), this protein is Lipid droplet-regulating VLDL assembly factor AUP1.